The chain runs to 623 residues: MPHSDELDAGNVLAVENLNIAFMQDQQKIAAVRNLSFSLQRGETLAIVGESGSGKSVTALALMRLLEQAGGLVQCDKMLLQRRSREVIELSEQSAAQMRHVRGADMAMIFQEPMTSLNPVFTVGEQIAESIRLHQNASREEAMVEAKRMLDQVRIPEAQTILSRYPHQLSGGMRQRVMIAMALSCRPAVLIADEPTTALDVTIQAQILQLIKVLQKEMSMGVIFITHDMGVVAEIADRVLVMYQGEAVETGTVEQIFHAPQHPYTRALLAAVPQLGAMKGLDYPRRFPLISLEHPAKQEPPIEQKTVVDGEPVLRVRNLVTRFPLRSGLLNRVTREVHAVEKVSFDLWPGETLSLVGESGSGKSTTGRALLRLVESQGGEIIFNGQRIDTLSPGKLQALRRDIQFIFQDPYASLDPRQTIGDSIIEPLCVHGLLPGKDAAARVAWLLERVGLLPEHAWRYPHEFSGGQRQRICIARALALNPKVIIADEAVSALDVSIRGQIINLLLDLQRDFGIAYLFISHDMAVVERISHRVAVMYLGQIVEIGPRRAVFENPQHPYTRKLLAAVPVAEPSRQRPQRVLLSDDLPSNIHLRGEEVAAVLLQCVGPGHYVAQPQSEYAFMRR.

ABC transporter domains lie at 15 to 269 (VENL…RALL) and 314 to 564 (LRVR…RKLL). ATP-binding positions include 49-56 (GESGSGKS) and 357-364 (GESGSGKS).

The protein belongs to the ABC transporter superfamily. Glutathione importer (TC 3.A.1.5.11) family. In terms of assembly, the complex is composed of two ATP-binding proteins (GsiA), two transmembrane proteins (GsiC and GsiD) and a solute-binding protein (GsiB).

It is found in the cell inner membrane. It catalyses the reaction glutathione(out) + ATP + H2O = glutathione(in) + ADP + phosphate + H(+). Its function is as follows. Part of the ABC transporter complex GsiABCD involved in glutathione import. Responsible for energy coupling to the transport system. The protein is Glutathione import ATP-binding protein GsiA of Shigella boydii serotype 4 (strain Sb227).